Reading from the N-terminus, the 39-residue chain is Photosystem II reaction center protein L (39 aa).

A helical membrane pass occupies residues 18-38; the sequence is SLYLGLLLIAVLGILFSSYFF.

It belongs to the PsbL family. In terms of assembly, PSII is composed of 1 copy each of membrane proteins PsbA, PsbB, PsbC, PsbD, PsbE, PsbF, PsbH, PsbI, PsbJ, PsbK, PsbL, PsbM, PsbT, PsbX, PsbY, PsbZ, Psb30/Ycf12, peripheral proteins PsbO, CyanoQ (PsbQ), PsbU, PsbV and a large number of cofactors. It forms dimeric complexes.

It is found in the cellular thylakoid membrane. Its function is as follows. One of the components of the core complex of photosystem II (PSII). PSII is a light-driven water:plastoquinone oxidoreductase that uses light energy to abstract electrons from H(2)O, generating O(2) and a proton gradient subsequently used for ATP formation. It consists of a core antenna complex that captures photons, and an electron transfer chain that converts photonic excitation into a charge separation. This subunit is found at the monomer-monomer interface and is required for correct PSII assembly and/or dimerization. The chain is Photosystem II reaction center protein L from Crocosphaera subtropica (strain ATCC 51142 / BH68) (Cyanothece sp. (strain ATCC 51142)).